Consider the following 250-residue polypeptide: Flavin-dependent thymidylate synthase (250 aa).

A ThyX domain is found at 7–233 (LSVELIACSS…PTVFGDFQVE (227 aa)). Residues 92–95 (ELVR), 103–107 (QLSQR), and Arg172 each bind dUMP. FAD-binding positions include 95–97 (RHR) and Gln103. Positions 95–105 (RHRHFSFSQLS) match the ThyX motif motif. FAD-binding positions include 188 to 190 (NFR) and His194. Arg199 is a dUMP binding site. The Involved in ionization of N3 of dUMP, leading to its activation role is filled by Arg199.

This sequence belongs to the thymidylate synthase ThyX family. Homotetramer. FAD is required as a cofactor.

The enzyme catalyses dUMP + (6R)-5,10-methylene-5,6,7,8-tetrahydrofolate + NADPH + H(+) = dTMP + (6S)-5,6,7,8-tetrahydrofolate + NADP(+). Its pathway is pyrimidine metabolism; dTTP biosynthesis. Functionally, catalyzes the reductive methylation of 2'-deoxyuridine-5'-monophosphate (dUMP) to 2'-deoxythymidine-5'-monophosphate (dTMP) while utilizing 5,10-methylenetetrahydrofolate (mTHF) as the methyl donor, and NADPH and FADH(2) as the reductant. The sequence is that of Flavin-dependent thymidylate synthase from Corynebacterium efficiens (strain DSM 44549 / YS-314 / AJ 12310 / JCM 11189 / NBRC 100395).